We begin with the raw amino-acid sequence, 120 residues long: ATP-dependent Clp protease adapter protein ClpS (120 aa).

This sequence belongs to the ClpS family. As to quaternary structure, binds to the N-terminal domain of the chaperone ClpA.

Functionally, involved in the modulation of the specificity of the ClpAP-mediated ATP-dependent protein degradation. This Pseudomonas savastanoi pv. phaseolicola (strain 1448A / Race 6) (Pseudomonas syringae pv. phaseolicola (strain 1448A / Race 6)) protein is ATP-dependent Clp protease adapter protein ClpS.